The chain runs to 204 residues: Outer-membrane lipoprotein LolB (204 aa).

The first 16 residues, 1–16 (MLRHLLVFSLIALLAG), serve as a signal peptide directing secretion. The N-palmitoyl cysteine moiety is linked to residue Cys-17. Residue Cys-17 is the site of S-diacylglycerol cysteine attachment.

Belongs to the LolB family. As to quaternary structure, monomer.

It is found in the cell outer membrane. Functionally, plays a critical role in the incorporation of lipoproteins in the outer membrane after they are released by the LolA protein. The chain is Outer-membrane lipoprotein LolB from Ectopseudomonas mendocina (strain ymp) (Pseudomonas mendocina).